We begin with the raw amino-acid sequence, 526 residues long: Amino acid transporter AVT1E (526 aa).

The segment at M1–P49 is disordered. A compositionally biased stretch (basic and acidic residues) spans D8–F18. The next 11 membrane-spanning stretches (helical) occupy residues S140 to V160, W165 to L185, I212 to M232, L253 to L273, L278 to F298, I320 to I340, V353 to F373, I397 to V417, G436 to V456, F458 to F478, and F494 to T514.

This sequence belongs to the amino acid/polyamine transporter 2 family. Amino acid/auxin permease (AAAP) (TC 2.A.18.5) subfamily.

The protein localises to the membrane. The chain is Amino acid transporter AVT1E from Arabidopsis thaliana (Mouse-ear cress).